Consider the following 317-residue polypeptide: Transaldolase (317 aa).

The Schiff-base intermediate with substrate role is filled by Lys-132.

It belongs to the transaldolase family. Type 1 subfamily. As to quaternary structure, homodimer.

The protein localises to the cytoplasm. The enzyme catalyses D-sedoheptulose 7-phosphate + D-glyceraldehyde 3-phosphate = D-erythrose 4-phosphate + beta-D-fructose 6-phosphate. It functions in the pathway carbohydrate degradation; pentose phosphate pathway; D-glyceraldehyde 3-phosphate and beta-D-fructose 6-phosphate from D-ribose 5-phosphate and D-xylulose 5-phosphate (non-oxidative stage): step 2/3. In terms of biological role, transaldolase is important for the balance of metabolites in the pentose-phosphate pathway. This chain is Transaldolase, found in Yersinia enterocolitica serotype O:8 / biotype 1B (strain NCTC 13174 / 8081).